The chain runs to 123 residues: SOSS complex subunit C homolog (123 aa).

Belongs to the SOSS-C family.

The chain is SOSS complex subunit C homolog from Drosophila ananassae (Fruit fly).